The chain runs to 129 residues: Glycine cleavage system H protein (129 aa).

In terms of domain architecture, Lipoyl-binding spans 24–106; the sequence is IAVIGITAYA…YGDGWLIKVR (83 aa). N6-lipoyllysine is present on Lys-65.

Belongs to the GcvH family. The glycine cleavage system is composed of four proteins: P, T, L and H. Requires (R)-lipoate as cofactor.

In terms of biological role, the glycine cleavage system catalyzes the degradation of glycine. The H protein shuttles the methylamine group of glycine from the P protein to the T protein. In Synechococcus sp. (strain JA-2-3B'a(2-13)) (Cyanobacteria bacterium Yellowstone B-Prime), this protein is Glycine cleavage system H protein.